The following is a 195-amino-acid chain: Imidazoleglycerol-phosphate dehydratase (195 aa).

It belongs to the imidazoleglycerol-phosphate dehydratase family.

The protein localises to the cytoplasm. It catalyses the reaction D-erythro-1-(imidazol-4-yl)glycerol 3-phosphate = 3-(imidazol-4-yl)-2-oxopropyl phosphate + H2O. It participates in amino-acid biosynthesis; L-histidine biosynthesis; L-histidine from 5-phospho-alpha-D-ribose 1-diphosphate: step 6/9. The protein is Imidazoleglycerol-phosphate dehydratase of Leuconostoc mesenteroides subsp. mesenteroides (strain ATCC 8293 / DSM 20343 / BCRC 11652 / CCM 1803 / JCM 6124 / NCDO 523 / NBRC 100496 / NCIMB 8023 / NCTC 12954 / NRRL B-1118 / 37Y).